A 440-amino-acid polypeptide reads, in one-letter code: C4-dicarboxylate TRAP transporter large permease protein DctM (440 aa).

Helical transmembrane passes span 4–24 (LIIF…SISL), 54–74 (FEIM…HGGV), 89–109 (WHGG…AVSG), 112–132 (PATV…QGFP), 148–168 (ILIP…GMVV), 181–201 (VGEL…FLAF), 230–250 (AAWG…GIFT), 255–275 (AAMS…DLTL), 291–311 (MLLY…HEGI), 318–338 (WMVN…ILLL), 349–369 (IVLI…IDPV), 370–390 (HFGI…PVGL), and 410–430 (VWPW…VPAI).

The protein belongs to the TRAP transporter large permease family. In terms of assembly, the complex comprises the extracytoplasmic solute receptor protein DctP, and the two transmembrane proteins DctQ and DctM.

It localises to the cell inner membrane. In terms of biological role, part of the tripartite ATP-independent periplasmic (TRAP) transport system DctPQM involved in C4-dicarboxylates uptake. This is C4-dicarboxylate TRAP transporter large permease protein DctM from Rhodobacter capsulatus (Rhodopseudomonas capsulata).